The sequence spans 75 residues: Protein TM_1420 (75 aa).

Residues Cys-6, Cys-11, Cys-39, and Cys-43 each coordinate [2Fe-2S] cluster.

Requires [2Fe-2S] cluster as cofactor.

Functionally, might be part of a multi-protein complex, possibly involved in metal cluster assembly. This Thermotoga maritima (strain ATCC 43589 / DSM 3109 / JCM 10099 / NBRC 100826 / MSB8) protein is Protein TM_1420.